A 207-amino-acid polypeptide reads, in one-letter code: Large ribosomal subunit protein uL3 (207 aa).

Residues Ala-129 to Pro-152 form a disordered region.

The protein belongs to the universal ribosomal protein uL3 family. Part of the 50S ribosomal subunit. Forms a cluster with proteins L14 and L19.

Its function is as follows. One of the primary rRNA binding proteins, it binds directly near the 3'-end of the 23S rRNA, where it nucleates assembly of the 50S subunit. The sequence is that of Large ribosomal subunit protein uL3 from Leptospira biflexa serovar Patoc (strain Patoc 1 / ATCC 23582 / Paris).